A 436-amino-acid chain; its full sequence is Cold sensitive U2 snRNA suppressor 1 (436 aa).

The segment covering 1–10 has biased composition (basic residues); sequence MARTKSRKRS. The segment at 1-22 is disordered; the sequence is MARTKSRKRSGNNQNKNASVVN. The segment covering 12–22 has biased composition (low complexity); the sequence is NNQNKNASVVN. 2 positions are modified to phosphothreonine: threonine 104 and threonine 112. Serine 114 carries the post-translational modification Phosphoserine. The segment at 374-436 is disordered; sequence EFENSKEDTQ…SEKQLYTVLK (63 aa). The segment covering 389–408 has biased composition (basic and acidic residues); sequence GRQDDKIDDEVEHKLDHFQE.

It to mammalian SAP 145. Some, to C.elegans ZK632.11. As to quaternary structure, belongs to the CWC complex (or CEF1-associated complex), a spliceosome sub-complex reminiscent of a late-stage spliceosome composed of the U2, U5 and U6 snRNAs and at least BUD13, BUD31, BRR2, CDC40, CEF1, CLF1, CUS1, CWC2, CWC15, CWC21, CWC22, CWC23, CWC24, CWC25, CWC27, ECM2, HSH155, IST3, ISY1, LEA1, MSL1, NTC20, PRP8, PRP9, PRP11, PRP19, PRP21, PRP22, PRP45, PRP46, SLU7, SMB1, SMD1, SMD2, SMD3, SMX2, SMX3, SNT309, SNU114, SPP2, SYF1, SYF2, RSE1 and YJU2. Interacts with RDS3.

It localises to the nucleus. Its function is as follows. Essential splicing protein required for U2 snRNP binding to pre-mRNA during spliceosome assembly. The polypeptide is Cold sensitive U2 snRNA suppressor 1 (CUS1) (Saccharomyces cerevisiae (strain ATCC 204508 / S288c) (Baker's yeast)).